The primary structure comprises 247 residues: MNILLCSINTQKGLYDISGVEVGQHLYWQIGGFQVHAQVLITSWVVIAILLGSAIIAVRNPQTIPTDGQNFFEYVLEFIRDVSKTQIGEEYGPWVPFIGTMFLFIFVSNWSGALLPWKIIQLPHGELAAPTNDINTTVALALLTSVAYFYAGLSKKGLSYFGKYIQPTPILLPINILEDFTKPLSLSFRLFGNILADELVVVVLVSLVPLVVPIPVMFLGLFTSGIQALIFATLAAAYIGESMEGHH.

5 consecutive transmembrane segments (helical) span residues 38–58, 95–115, 134–154, 199–219, and 220–240; these read QVLITSWVVIAILLGSAIIAV, VPFIGTMFLFIFVSNWSGALL, INTTVALALLTSVAYFYAGLS, LVVVVLVSLVPLVVPIPVMFL, and GLFTSGIQALIFATLAAAYIG.

The protein belongs to the ATPase A chain family. In terms of assembly, F-type ATPases have 2 components, CF(1) - the catalytic core - and CF(0) - the membrane proton channel. CF(1) has five subunits: alpha(3), beta(3), gamma(1), delta(1), epsilon(1). CF(0) has four main subunits: a, b, b' and c.

The protein resides in the plastid. It localises to the chloroplast thylakoid membrane. Functionally, key component of the proton channel; it plays a direct role in the translocation of protons across the membrane. The protein is ATP synthase subunit a, chloroplastic of Cucumis sativus (Cucumber).